The primary structure comprises 190 residues: Xanthine phosphoribosyltransferase 2 (190 aa).

Residues Leu-20 and Asn-27 each coordinate xanthine. A 5-phospho-alpha-D-ribose 1-diphosphate-binding site is contributed by 129-133 (ANGCA). Lys-157 serves as a coordination point for xanthine.

It belongs to the purine/pyrimidine phosphoribosyltransferase family. Xpt subfamily. In terms of assembly, homodimer.

It localises to the cytoplasm. The enzyme catalyses XMP + diphosphate = xanthine + 5-phospho-alpha-D-ribose 1-diphosphate. It functions in the pathway purine metabolism; XMP biosynthesis via salvage pathway; XMP from xanthine: step 1/1. Functionally, converts the preformed base xanthine, a product of nucleic acid breakdown, to xanthosine 5'-monophosphate (XMP), so it can be reused for RNA or DNA synthesis. The polypeptide is Xanthine phosphoribosyltransferase 2 (Clostridium botulinum (strain ATCC 19397 / Type A)).